We begin with the raw amino-acid sequence, 1232 residues long: Anion exchange protein 3 (1232 aa).

Residues 1–11 (MANGVIPPPGG) are compositionally biased toward pro residues. Disordered regions lie at residues 1 to 316 (MANG…KLDR) and 429 to 499 (NDDK…DSHR). Topologically, residues 1 to 708 (MANGVIPPPG…DLRDALHSQC (708 aa)) are cytoplasmic. The span at 58-75 (DPEKPSRSYSERDFEFHR) shows a compositional bias: basic and acidic residues. Composition is skewed to basic residues over residues 76–97 (HTSH…KLRR) and 104–113 (RHTRRKRKKE). A compositionally biased stretch (acidic residues) spans 134–152 (VDEEEEEEEEEEGESEAEP). Phosphoserine is present on residues S167, S170, S175, and S198. Positions 267 to 279 (DDMKSHRLEDNPG) are enriched in basic and acidic residues. A compositionally biased stretch (basic residues) spans 280 to 289 (VRRHLVKKPS). R295 is subject to Omega-N-methylarginine. The span at 305-316 (LRRKKKKKKLDR) shows a compositional bias: basic residues. Residues 440 to 450 (NPSSSSMNSVL) show a composition bias toward polar residues. Residues 481–499 (HDPDAKEKPLHMPGGDSHR) are compositionally biased toward basic and acidic residues. Helical transmembrane passes span 709-731 (VAAV…GLLG), 737-774 (LMGV…LLVF), 794-816 (VWVG…SFLV), 826-847 (IFAF…YKVF), and 893-910 (ALLS…AFFL). The segment at 709–1232 (VAAVLFIYFA…DEYNELHMPV (524 aa)) is membrane (anion exchange). At 911 to 925 (RKFRNSRFLGGKARR) the chain is on the cytoplasmic side. 5 consecutive transmembrane segments (helical) span residues 926–946 (IIGD…DYSI), 980–1002 (PFPP…LIFM), 1028–1049 (LLLI…LTAA), 1083–1128 (VTGV…IQLS), and 1155–1191 (MHLF…TVPL). Residue C1165 is the site of S-palmitoyl cysteine attachment.

The protein belongs to the anion exchanger (TC 2.A.31) family.

It is found in the cell membrane. It carries out the reaction hydrogencarbonate(in) + chloride(out) = hydrogencarbonate(out) + chloride(in). In terms of biological role, sodium-independent anion exchanger which mediates the electroneutral exchange of chloride for bicarbonate ions across the cell membrane. May be involved in the regulation of intracellular pH, and the modulation of cardiac action potential. In Plecturocebus moloch (Dusky titi monkey), this protein is Anion exchange protein 3 (SLC4A3).